Here is a 443-residue protein sequence, read N- to C-terminus: Ribosomal protein uS12 methylthiotransferase RimO (443 aa).

The MTTase N-terminal domain maps to 5–116 (PSVAVAHLGC…IVDVIQRAEA (112 aa)). [4Fe-4S] cluster is bound by residues cysteine 14, cysteine 50, cysteine 79, cysteine 154, cysteine 158, and cysteine 161. The Radical SAM core domain occupies 140–370 (TTTEGTAYVR…ALQQPISWQQ (231 aa)). The TRAM domain maps to 372–442 (QQEVGKTVQV…AYDLQGQLVS (71 aa)).

Belongs to the methylthiotransferase family. RimO subfamily. It depends on [4Fe-4S] cluster as a cofactor.

Its subcellular location is the cytoplasm. It carries out the reaction L-aspartate(89)-[ribosomal protein uS12]-hydrogen + (sulfur carrier)-SH + AH2 + 2 S-adenosyl-L-methionine = 3-methylsulfanyl-L-aspartate(89)-[ribosomal protein uS12]-hydrogen + (sulfur carrier)-H + 5'-deoxyadenosine + L-methionine + A + S-adenosyl-L-homocysteine + 2 H(+). Functionally, catalyzes the methylthiolation of an aspartic acid residue of ribosomal protein uS12. The polypeptide is Ribosomal protein uS12 methylthiotransferase RimO (Acaryochloris marina (strain MBIC 11017)).